The chain runs to 602 residues: Leucine-rich repeat-containing protein 40 (602 aa).

The residue at position 71 (serine 71) is a Phosphoserine. LRR repeat units follow at residues 83–104 (DLTK…LRLL), 106–127 (ALTV…IREL), 129–150 (NLQK…ITNL), 152–173 (NLKC…FEQL), 175–196 (NLED…FSSL), 198–219 (SLVR…INRM), 221–242 (RLKH…LAGM), 244–265 (SLEL…PSCS), 266–286 (LLKE…EHLK), 290–311 (SILV…IILL), 313–335 (SLER…GNLH), 336–356 (LKFL…IISK), 400–421 (TLKI…VFDA), 426–447 (IVTS…MVEL), 450–472 (MVSD…CVLQ), 473–494 (KLTF…MESL), 496–517 (RLQT…LYRI), 519–540 (TLET…KMKM), 543–564 (NLTT…LGNC), and 566–586 (NLRT…AILM).

In Homo sapiens (Human), this protein is Leucine-rich repeat-containing protein 40 (LRRC40).